A 133-amino-acid polypeptide reads, in one-letter code: MSWQAYVDEHLMCNIEDTGNHLTSSAIVGVDGSIWAQSSNFPQVKPQEIEAINKEFDGPNTLAPTGLFLGGEKYMVIQGEPGAVIRGKKGPGGVCIKKTTQALIFGIYDEPVAPGQCNMVVERLGDYLIEQGL.

A disulfide bond links Cys95 and Cys117.

The protein belongs to the profilin family. In terms of assembly, occurs in many kinds of cells as a complex with monomeric actin in a 1:1 ratio. In terms of tissue distribution, expressed in pollen (at protein and mRNA level).

It localises to the cytoplasm. Its subcellular location is the cytoskeleton. Binds to actin and affects the structure of the cytoskeleton. At high concentrations, profilin prevents the polymerization of actin, whereas it enhances it at low concentrations. In Kali turgidum (Prickly saltwort), this protein is Profilin Sal k 4.0201.